The following is a 141-amino-acid chain: Nucleoside diphosphate kinase (141 aa).

ATP contacts are provided by lysine 11, phenylalanine 59, arginine 87, threonine 93, arginine 104, and asparagine 114. Histidine 117 (pros-phosphohistidine intermediate) is an active-site residue.

Belongs to the NDK family. Mg(2+) is required as a cofactor.

It localises to the cytoplasm. The enzyme catalyses a 2'-deoxyribonucleoside 5'-diphosphate + ATP = a 2'-deoxyribonucleoside 5'-triphosphate + ADP. The catalysed reaction is a ribonucleoside 5'-diphosphate + ATP = a ribonucleoside 5'-triphosphate + ADP. Its function is as follows. Major role in the synthesis of nucleoside triphosphates other than ATP. The ATP gamma phosphate is transferred to the NDP beta phosphate via a ping-pong mechanism, using a phosphorylated active-site intermediate. The sequence is that of Nucleoside diphosphate kinase from Staphylothermus marinus (strain ATCC 43588 / DSM 3639 / JCM 9404 / F1).